The following is a 259-amino-acid chain: Phosphate import ATP-binding protein PstB (259 aa).

Positions 5–248 (IEVNDLNVYY…NIIFSNPSAQ (244 aa)) constitute an ABC transporter domain. 37–44 (GPSGCGKS) provides a ligand contact to ATP.

Belongs to the ABC transporter superfamily. Phosphate importer (TC 3.A.1.7) family. In terms of assembly, the complex is composed of two ATP-binding proteins (PstB), two transmembrane proteins (PstC and PstA) and a solute-binding protein (PstS).

The protein localises to the cell membrane. The enzyme catalyses phosphate(out) + ATP + H2O = ADP + 2 phosphate(in) + H(+). Part of the ABC transporter complex PstSACB involved in phosphate import. Responsible for energy coupling to the transport system. The protein is Phosphate import ATP-binding protein PstB of Leifsonia xyli subsp. xyli (strain CTCB07).